The following is a 37-amino-acid chain: Turripeptide Lol6.2 (37 aa).

3 disulfides stabilise this stretch: cysteine 4-cysteine 16, cysteine 8-cysteine 21, and cysteine 15-cysteine 29.

Expressed by the venom duct.

Its subcellular location is the secreted. Functionally, acts as a neurotoxin by inhibiting an ion channel. The sequence is that of Turripeptide Lol6.2 from Iotyrris olangoensis (Sea snail).